We begin with the raw amino-acid sequence, 138 residues long: Large ribosomal subunit protein uL16 (138 aa).

The segment covering 1–15 has biased composition (basic residues); sequence MLSPRKVKYRKKQRG. Positions 1–21 are disordered; sequence MLSPRKVKYRKKQRGRLSGEA.

This sequence belongs to the universal ribosomal protein uL16 family. In terms of assembly, part of the 50S ribosomal subunit.

Its function is as follows. Binds 23S rRNA and is also seen to make contacts with the A and possibly P site tRNAs. The polypeptide is Large ribosomal subunit protein uL16 (Borrelia recurrentis (strain A1)).